The chain runs to 564 residues: Phenylalanine--tRNA ligase beta subunit (564 aa).

One can recognise a B5 domain in the interval 286–362; it reads YFQNTLEVSV…IGRGLDSFKP (77 aa). Mg(2+) contacts are provided by Asp-340, Asp-346, Glu-349, and Glu-350.

This sequence belongs to the phenylalanyl-tRNA synthetase beta subunit family. Type 2 subfamily. Tetramer of two alpha and two beta subunits. Mg(2+) is required as a cofactor.

It localises to the cytoplasm. It catalyses the reaction tRNA(Phe) + L-phenylalanine + ATP = L-phenylalanyl-tRNA(Phe) + AMP + diphosphate + H(+). The protein is Phenylalanine--tRNA ligase beta subunit of Borrelia hermsii (strain HS1 / DAH).